The chain runs to 335 residues: Mitochondrial uncoupling protein 4C (335 aa).

3 Solcar repeats span residues 34–125 (RNLF…FRRP), 137–229 (LKIY…SKRT), and 238–329 (EGLP…LRQW). Helical transmembrane passes span 40-57 (YVNT…VFPL), 100-118 (GFSA…RVVL), 138-157 (KIYM…QALA), 204-223 (GVGP…VGSY), 244-264 (FVSS…ADVI), and 304-323 (GLMP…WLSV).

This sequence belongs to the mitochondrial carrier (TC 2.A.29) family.

Its subcellular location is the mitochondrion inner membrane. Functionally, mitochondrial protein that is likely to be responsible for thermogenic respiration. Likely to function in mitochondrial uncoupling i.e. creating mitochondrial proton leaks across the inner mitochondrial membrane and can therefore dissipate the mitochondrial proton gradient and convert the energy of substrate oxidation into heat instead of ATP. Involved in cold tolerance, it is required for development to the adult stage at low temperatures. In Drosophila melanogaster (Fruit fly), this protein is Mitochondrial uncoupling protein 4C.